A 660-amino-acid polypeptide reads, in one-letter code: MSAIESVLHERRQFAPPAAVEKAAAISGMAAYRALAEEAERDYEGFWARLARETLEWRKPFGKVLDETNAPFYKWFEDGELNASYNCLDRHVAAGLGERVAVIFEADDGTVTRVTYADLLARVSRFANALKKRGVGRGDRVVIYIPMSVEGIVAMQACARIGATHSVVFGGFSSKSLHERIVDVGATALVTADEQMRGGKTLPLKSIADEALAMGGCDAVKTVVVYRRTGGNVDWHAGRDVWMHEMVANESDACEPEWVGAEHPLFILYTSGSTGKPKGVQHSTAGYLLWVAQTMKWTFDWKPDDVFWCTADIGWVTGHSYITYGPLAVGATQVVFEGVPTYPNAGRFWKMIGDHKVTVFYTAPTAIRSLIKAAEADDRVHPRSYDLSSLRIIGTVGEPINPEAWIWYHKNVGQARCPIVDTWWQTETGGHMITPLPGATPTVPGSCTLPLPGIMAAVVDETGQDVPNGQGGILVVKRPWPAMARTIWGDPERFKKSYFPEELGGRLYLAGDGTVRDKETGYFTIMGRIDDVLNVSGHRLGTMEIESALVSHELVAEAAVVGRPDDTTGEAVVAFVVLKRSRPEGEEAAALAKTLRDWVGKEIGPIAKPKDIRFGDNLPKTRSGKIMRRLLRSLAKGEAITQDTSTLENPAILEQLAEVR.

CoA is bound by residues 197-200 (RGGK) and threonine 317. Residues 397–399 (GEP), 421–426 (DTWWQT), aspartate 512, and arginine 528 each bind ATP. Serine 536 lines the CoA pocket. Arginine 539 contributes to the ATP binding site. Mg(2+) contacts are provided by valine 550, histidine 552, and valine 555. Lysine 625 bears the N6-acetyllysine mark.

Belongs to the ATP-dependent AMP-binding enzyme family. Mg(2+) serves as cofactor. Acetylated. Deacetylation by the SIR2-homolog deacetylase activates the enzyme.

It carries out the reaction acetate + ATP + CoA = acetyl-CoA + AMP + diphosphate. In terms of biological role, catalyzes the conversion of acetate into acetyl-CoA (AcCoA), an essential intermediate at the junction of anabolic and catabolic pathways. AcsA undergoes a two-step reaction. In the first half reaction, AcsA combines acetate with ATP to form acetyl-adenylate (AcAMP) intermediate. In the second half reaction, it can then transfer the acetyl group from AcAMP to the sulfhydryl group of CoA, forming the product AcCoA. The chain is Acetyl-coenzyme A synthetase from Burkholderia mallei (strain NCTC 10247).